Reading from the N-terminus, the 553-residue chain is Putative polyamine transporter (553 aa).

The next 11 helical transmembrane spans lie at 43-63 (WSIF…AACF), 68-88 (LVVG…TSVA), 133-153 (ITAA…LHSF), 163-183 (AQIF…ACFP), 190-210 (FSSA…IMIL), 240-260 (WPTG…MSGY), 280-300 (AIVL…IAIA), 333-353 (VIGA…NCLL), 397-417 (LLLL…SIGA), 453-473 (IGWV…FPTV), and 485-505 (WTCL…VVYA).

The protein belongs to the amino acid-polyamine-organocation (APC) superfamily.

It is found in the membrane. This is Putative polyamine transporter (GPT1) from Candida albicans (Yeast).